Consider the following 561-residue polypeptide: Dihydroxy-acid dehydratase (561 aa).

D78 lines the Mg(2+) pocket. C119 serves as a coordination point for [2Fe-2S] cluster. Mg(2+)-binding residues include D120 and K121. K121 carries the post-translational modification N6-carboxylysine. C192 contributes to the [2Fe-2S] cluster binding site. E448 contributes to the Mg(2+) binding site. Residue S474 is the Proton acceptor of the active site.

The protein belongs to the IlvD/Edd family. In terms of assembly, homodimer. [2Fe-2S] cluster is required as a cofactor. Mg(2+) serves as cofactor.

The enzyme catalyses (2R)-2,3-dihydroxy-3-methylbutanoate = 3-methyl-2-oxobutanoate + H2O. The catalysed reaction is (2R,3R)-2,3-dihydroxy-3-methylpentanoate = (S)-3-methyl-2-oxopentanoate + H2O. The protein operates within amino-acid biosynthesis; L-isoleucine biosynthesis; L-isoleucine from 2-oxobutanoate: step 3/4. It participates in amino-acid biosynthesis; L-valine biosynthesis; L-valine from pyruvate: step 3/4. Its function is as follows. Functions in the biosynthesis of branched-chain amino acids. Catalyzes the dehydration of (2R,3R)-2,3-dihydroxy-3-methylpentanoate (2,3-dihydroxy-3-methylvalerate) into 2-oxo-3-methylpentanoate (2-oxo-3-methylvalerate) and of (2R)-2,3-dihydroxy-3-methylbutanoate (2,3-dihydroxyisovalerate) into 2-oxo-3-methylbutanoate (2-oxoisovalerate), the penultimate precursor to L-isoleucine and L-valine, respectively. The chain is Dihydroxy-acid dehydratase from Sulfurimonas denitrificans (strain ATCC 33889 / DSM 1251) (Thiomicrospira denitrificans (strain ATCC 33889 / DSM 1251)).